The chain runs to 403 residues: Dual-specificity RNA methyltransferase RlmN (403 aa).

The Proton acceptor role is filled by E126. The Radical SAM core domain maps to 132 to 375; that stretch reads ETDRGTLCVS…VRTPRGRDIL (244 aa). C139 and C378 are joined by a disulfide. Residues C146, C150, and C153 each contribute to the [4Fe-4S] cluster site. S-adenosyl-L-methionine is bound by residues 204–205, S236, 258–260, and N335; these read GE and SLH. C378 acts as the S-methylcysteine intermediate in catalysis.

The protein belongs to the radical SAM superfamily. RlmN family. Requires [4Fe-4S] cluster as cofactor.

It is found in the cytoplasm. It carries out the reaction adenosine(2503) in 23S rRNA + 2 reduced [2Fe-2S]-[ferredoxin] + 2 S-adenosyl-L-methionine = 2-methyladenosine(2503) in 23S rRNA + 5'-deoxyadenosine + L-methionine + 2 oxidized [2Fe-2S]-[ferredoxin] + S-adenosyl-L-homocysteine. The enzyme catalyses adenosine(37) in tRNA + 2 reduced [2Fe-2S]-[ferredoxin] + 2 S-adenosyl-L-methionine = 2-methyladenosine(37) in tRNA + 5'-deoxyadenosine + L-methionine + 2 oxidized [2Fe-2S]-[ferredoxin] + S-adenosyl-L-homocysteine. In terms of biological role, specifically methylates position 2 of adenine 2503 in 23S rRNA and position 2 of adenine 37 in tRNAs. m2A2503 modification seems to play a crucial role in the proofreading step occurring at the peptidyl transferase center and thus would serve to optimize ribosomal fidelity. This chain is Dual-specificity RNA methyltransferase RlmN, found in Bradyrhizobium sp. (strain ORS 278).